The chain runs to 201 residues: FMN-dependent NADH:quinone oxidoreductase (201 aa).

FMN contacts are provided by residues serine 9 and 16-18; that span reads SYS.

The protein belongs to the azoreductase type 1 family. As to quaternary structure, homodimer. The cofactor is FMN.

The enzyme catalyses 2 a quinone + NADH + H(+) = 2 a 1,4-benzosemiquinone + NAD(+). The catalysed reaction is N,N-dimethyl-1,4-phenylenediamine + anthranilate + 2 NAD(+) = 2-(4-dimethylaminophenyl)diazenylbenzoate + 2 NADH + 2 H(+). Quinone reductase that provides resistance to thiol-specific stress caused by electrophilic quinones. Its function is as follows. Also exhibits azoreductase activity. Catalyzes the reductive cleavage of the azo bond in aromatic azo compounds to the corresponding amines. The sequence is that of FMN-dependent NADH:quinone oxidoreductase from Mesomycoplasma hyopneumoniae (strain 7448) (Mycoplasma hyopneumoniae).